The primary structure comprises 95 residues: UPF0358 protein GTNG_0942 (95 aa).

Belongs to the UPF0358 family.

This Geobacillus thermodenitrificans (strain NG80-2) protein is UPF0358 protein GTNG_0942.